Here is a 616-residue protein sequence, read N- to C-terminus: Chaperone protein HscA (616 aa).

The protein belongs to the heat shock protein 70 family.

Chaperone involved in the maturation of iron-sulfur cluster-containing proteins. Has a low intrinsic ATPase activity which is markedly stimulated by HscB. Involved in the maturation of IscU. In Cronobacter sakazakii (strain ATCC BAA-894) (Enterobacter sakazakii), this protein is Chaperone protein HscA.